The sequence spans 447 residues: Argininosuccinate synthase (447 aa).

Residues 17-25 (AFSGGLDTS) and alanine 43 contribute to the ATP site. L-citrulline is bound at residue tyrosine 99. Residues glycine 129 and threonine 131 each coordinate ATP. L-aspartate is bound by residues threonine 131, asparagine 135, and aspartate 136. Asparagine 135 is a binding site for L-citrulline. Aspartate 136 contributes to the ATP binding site. 2 residues coordinate L-citrulline: arginine 139 and serine 192. Aspartate 194 contributes to the ATP binding site. Residues threonine 201, glutamate 203, and glutamate 280 each contribute to the L-citrulline site.

It belongs to the argininosuccinate synthase family. Type 2 subfamily. As to quaternary structure, homotetramer.

It localises to the cytoplasm. It catalyses the reaction L-citrulline + L-aspartate + ATP = 2-(N(omega)-L-arginino)succinate + AMP + diphosphate + H(+). Its pathway is amino-acid biosynthesis; L-arginine biosynthesis; L-arginine from L-ornithine and carbamoyl phosphate: step 2/3. This Escherichia coli O9:H4 (strain HS) protein is Argininosuccinate synthase.